The sequence spans 372 residues: Aminomethyltransferase (372 aa).

This sequence belongs to the GcvT family. In terms of assembly, the glycine cleavage system is composed of four proteins: P, T, L and H.

The catalysed reaction is N(6)-[(R)-S(8)-aminomethyldihydrolipoyl]-L-lysyl-[protein] + (6S)-5,6,7,8-tetrahydrofolate = N(6)-[(R)-dihydrolipoyl]-L-lysyl-[protein] + (6R)-5,10-methylene-5,6,7,8-tetrahydrofolate + NH4(+). Its function is as follows. The glycine cleavage system catalyzes the degradation of glycine. This is Aminomethyltransferase from Prochlorococcus marinus (strain NATL2A).